Here is a 74-residue protein sequence, read N- to C-terminus: Guanine nucleotide-binding protein G(T) subunit gamma-T1 (74 aa).

Cys71 carries the post-translational modification Cysteine methyl ester. Cys71 carries the S-farnesyl cysteine lipid modification. The propeptide at 72–74 is removed in mature form; the sequence is VIS.

This sequence belongs to the G protein gamma family. G proteins are composed of 3 units, alpha, beta and gamma. In terms of tissue distribution, retinal rod outer segment.

The protein resides in the cell membrane. Its function is as follows. Guanine nucleotide-binding proteins (G proteins) are involved as a modulator or transducer in various transmembrane signaling systems. The beta and gamma chains are required for the GTPase activity, for replacement of GDP by GTP, and for G protein-effector interaction. This chain is Guanine nucleotide-binding protein G(T) subunit gamma-T1 (GNGT1), found in Bos taurus (Bovine).